Here is a 186-residue protein sequence, read N- to C-terminus: Interferon lambda-3 (186 aa).

The signal sequence occupies residues 1-21; that stretch reads MVCYGVTIILVGTLGSLLVGA. Cystine bridges form between cysteine 31-cysteine 128, cysteine 65-cysteine 160, and cysteine 178-cysteine 185.

The protein belongs to the lambda interferon family.

It localises to the secreted. In terms of biological role, cytokine which plays a critical role in the antiviral host defense, predominantly in the epithelial tissues. Acts as a ligand for the heterodimeric class II cytokine receptor composed of IL10RB and IFNLR1, and receptor engagement leads to the activation of the JAK/STAT signaling pathway resulting in the expression of IFN-stimulated genes (ISG), which mediate the antiviral state. Has a restricted receptor distribution and therefore restricted targets: is primarily active in epithelial cells and this cell type-selective action is because of the epithelial cell-specific expression of its receptor IFNLR1. Exhibits antiviral activity against the H5N1 influenza A virus. Induces the expression of the antiviral MX protein in epithelial-rich tissues, such as intestine, trachea and lung. This is Interferon lambda-3 (IFNL3) from Gallus gallus (Chicken).